A 316-amino-acid polypeptide reads, in one-letter code: Protoheme IX farnesyltransferase (316 aa).

The next 9 membrane-spanning stretches (helical) occupy residues 34–54 (VMSL…GHIN), 55–75 (PFIG…SGAL), 95–115 (IPAG…LSAF), 118–138 (IILG…TIFF), 155–175 (IVIG…CVTG), 182–202 (IVLF…LALF), 228–250 (IVIY…FASL), 254–273 (AFAT…VLRM), and 287–307 (FAFS…DYAI).

This sequence belongs to the UbiA prenyltransferase family. Protoheme IX farnesyltransferase subfamily.

It is found in the cell inner membrane. It carries out the reaction heme b + (2E,6E)-farnesyl diphosphate + H2O = Fe(II)-heme o + diphosphate. The protein operates within porphyrin-containing compound metabolism; heme O biosynthesis; heme O from protoheme: step 1/1. Converts heme B (protoheme IX) to heme O by substitution of the vinyl group on carbon 2 of heme B porphyrin ring with a hydroxyethyl farnesyl side group. The protein is Protoheme IX farnesyltransferase of Rhizobium meliloti (strain 1021) (Ensifer meliloti).